The sequence spans 500 residues: Xylan O-acetyltransferase 2 (500 aa).

Residues 1–25 lie on the Cytoplasmic side of the membrane; the sequence is MGLPGRRNPLLSARRAAASLRRSRR. Residues 26 to 43 traverse the membrane as a helical; Signal-anchor for type II membrane protein segment; sequence LPVYVAAVFFVASVLLMF. The Lumenal portion of the chain corresponds to 44–500; that stretch reads RDEILYLTTA…RPPAAAGHVA (457 aa). The segment at 84–116 is disordered; sequence PVLLGHGGKPEKHHSVTERHRPKVSAKRRPNKK. Over residues 91-102 the composition is skewed to basic and acidic residues; sequence GKPEKHHSVTER. Residues 103 to 116 show a composition bias toward basic residues; that stretch reads HRPKVSAKRRPNKK. 4 disulfides stabilise this stretch: Cys143/Cys194, Cys165/Cys231, Cys174/Cys472, and Cys388/Cys468. Asn144 and Asn154 each carry an N-linked (GlcNAc...) asparagine glycan. The GDS motif signature appears at 218–220; that stretch reads GDS. Ser220 functions as the Nucleophile in the catalytic mechanism. N-linked (GlcNAc...) asparagine glycans are attached at residues Asn260 and Asn416. Asp467 serves as the catalytic Proton donor. Residues 467–470 carry the DXXH motif motif; sequence DCIH. The active-site Proton acceptor is His470.

It belongs to the PC-esterase family. TBL subfamily. As to expression, expressed at low levels in roots and leaves.

It is found in the golgi apparatus membrane. In terms of biological role, xylan acetyltransferase required for 2-O- and 3-O-monoacetylation of xylosyl residues in xylan. Catalyzes the 2-O-acetylation of xylan, followed by nonenzymatic acetyl migration to the O-3 position, resulting in products that are monoacetylated at both O-2 and O-3 positions. This Oryza sativa subsp. japonica (Rice) protein is Xylan O-acetyltransferase 2.